The chain runs to 303 residues: Putative band 7 family protein R614 (303 aa).

It belongs to the band 7/mec-2 family.

The sequence is that of Putative band 7 family protein R614 from Acanthamoeba polyphaga (Amoeba).